Consider the following 500-residue polypeptide: Maturase K (500 aa).

This sequence belongs to the intron maturase 2 family. MatK subfamily.

Its subcellular location is the plastid. The protein localises to the chloroplast. In terms of biological role, usually encoded in the trnK tRNA gene intron. Probably assists in splicing its own and other chloroplast group II introns. The protein is Maturase K of Brasenia schreberi (Water shield).